The following is a 119-amino-acid chain: Large ribosomal subunit protein bL20 (119 aa).

Belongs to the bacterial ribosomal protein bL20 family.

Its function is as follows. Binds directly to 23S ribosomal RNA and is necessary for the in vitro assembly process of the 50S ribosomal subunit. It is not involved in the protein synthesizing functions of that subunit. The polypeptide is Large ribosomal subunit protein bL20 (Enterococcus faecalis (strain ATCC 700802 / V583)).